The following is a 268-amino-acid chain: MLDWNPALYLRFANERTRPAAELLARVPLAQARHVVDLGCGPGNSTELLAQRYAGATITGIDNSQAMLATARQHLPEARFTLADIASWTPAPGESAPDLIYANASLQWVGEHETLIPRLFAQLAPGGVLAIQMPDNRQEATHRVMREIASLPKFAAYIGDAAKVRADILPIRSYYDLLAGPQEQAGVEAGAVDVWHTVYQHPMDSAGAIVQWLRGTGLKPFVEGLPEALQADFLTEYENRVDAAYGVRADGRRLLAFPRLFIVAQRKP.

It belongs to the methyltransferase superfamily. Tam family.

The protein resides in the cytoplasm. It catalyses the reaction trans-aconitate + S-adenosyl-L-methionine = (E)-3-(methoxycarbonyl)pent-2-enedioate + S-adenosyl-L-homocysteine. In terms of biological role, catalyzes the S-adenosylmethionine monomethyl esterification of trans-aconitate. This is Trans-aconitate 2-methyltransferase from Delftia acidovorans (strain DSM 14801 / SPH-1).